Here is a 234-residue protein sequence, read N- to C-terminus: Large ribosomal subunit protein uL1 (234 aa).

Belongs to the universal ribosomal protein uL1 family. As to quaternary structure, part of the 50S ribosomal subunit.

Its function is as follows. Binds directly to 23S rRNA. The L1 stalk is quite mobile in the ribosome, and is involved in E site tRNA release. In terms of biological role, protein L1 is also a translational repressor protein, it controls the translation of the L11 operon by binding to its mRNA. This chain is Large ribosomal subunit protein uL1, found in Desulfatibacillum aliphaticivorans.